We begin with the raw amino-acid sequence, 1300 residues long: DNA-directed RNA polymerase subunit beta (1300 aa).

This sequence belongs to the RNA polymerase beta chain family. In terms of assembly, the RNAP catalytic core consists of 2 alpha, 1 beta, 1 beta' and 1 omega subunit. When a sigma factor is associated with the core the holoenzyme is formed, which can initiate transcription.

The enzyme catalyses RNA(n) + a ribonucleoside 5'-triphosphate = RNA(n+1) + diphosphate. Functionally, DNA-dependent RNA polymerase catalyzes the transcription of DNA into RNA using the four ribonucleoside triphosphates as substrates. This is DNA-directed RNA polymerase subunit beta from Chlorobium chlorochromatii (strain CaD3).